Consider the following 1112-residue polypeptide: MDEIHGEVSPPAINRSNGALVSDNISQVVEGVDNVERPAKVAKGYSAANRPPPELPHITNNVIPLSNVLKFYTQEAFKQITTLVENLASTKDSEDDSVRKKKFLELIIALRQDFIKIYTLVKWAANSKDVSRFIDLLNWLRMQEFYFDQLTFQLNALNGYSGAKLPNSDLITSLEVLFKGRPQLPSYNYIKIPKISPEKTLEVMQDLNLILMTRIALIDIPKRFINNYVIKDGRIYFSVPNEFQVSITVANDMIIESHDEYTKSPFYFIDFKFLFGINPDTSLITHRDNKIVTKLPRSSHENLEKIVNATLLNQGLHGLYDLLHKFSISFKLYLIAKQLKELQINTRWRNNLQVNYQNGKSLIILNYWSGQYLSKGWKSFIELGIDRNYNLNFRWFKNGKYNVNTELSALFNKHLKNTNEGEEEKDDSTDDIEEPEDLNVDLILNIVVNKHSELLMSKVFNSLDAKLNTTDNPDQISYITPHQLLIKSSPTKSTIFCINPLTGLFYFIDPCPVQNLIAKKINSPPTVVKNKNFVAESDMVNTIVDGLTQLRLEIFNKEIHNRLLTTEWINNDIIGLNDYEISRLSNFFANSLDYNLNVNKIQFYRRKNWPSSWFLINLVSGVTSVTFWWVARIKSVSGEWKIQWIQKLHLNEKTPSVEITDDPTNLNFEFFNNLSTACSNMIIDHMLLEELFKRNIKFLKVDNTALILQKFNIDKIPDDEDTQDTDDKNKPLIYESIIMIYNDNNLLPVYNSATSLFLKIKLINLNNLTQMKLKLFGKLRNLSIRNSPENFLQLNLKIDEIKNFFEIDDLINLSSRTNGSDSASSATTNHLLDKIFNNLNKLNKLIKILDQLNKNKIQIINNSVNDIIIKIDDNLDNLIIKLPEKATDSIKLISEEEVKDGGNPEVKLILDYLNKYLSNYYSDDFFANDEDKFYDGNKKTSIVGIIKYLKEINPILKSVQTIKAKLRKPESAFKLSNGLSKLNFDIKFTTLNLIQYVFHMNYQTPSSSKKIFKDKIVISLSFKNNKFDKVSKNLIKISLKDNLNSKNLKYKKLFELIFKSINDGSMDAHAHQLIKLNYDFLVNSSLVGELMVRIANCFVLYLQAESNGRYNQ.

The protein belongs to the Mediator complex subunit 14 family. In terms of assembly, component of the Mediator complex.

It localises to the nucleus. Component of the Mediator complex, a coactivator involved in the regulated transcription of nearly all RNA polymerase II-dependent genes. Mediator functions as a bridge to convey information from gene-specific regulatory proteins to the basal RNA polymerase II transcription machinery. Mediator is recruited to promoters by direct interactions with regulatory proteins and serves as a scaffold for the assembly of a functional preinitiation complex with RNA polymerase II and the general transcription factors. This Scheffersomyces stipitis (strain ATCC 58785 / CBS 6054 / NBRC 10063 / NRRL Y-11545) (Yeast) protein is Mediator of RNA polymerase II transcription subunit 14 (RGR1).